Reading from the N-terminus, the 173-residue chain is Crossover junction endodeoxyribonuclease RuvC (173 aa).

Active-site residues include D8, E67, and D139. Residues D8, E67, and D139 each contribute to the Mg(2+) site.

The protein belongs to the RuvC family. In terms of assembly, homodimer which binds Holliday junction (HJ) DNA. The HJ becomes 2-fold symmetrical on binding to RuvC with unstacked arms; it has a different conformation from HJ DNA in complex with RuvA. In the full resolvosome a probable DNA-RuvA(4)-RuvB(12)-RuvC(2) complex forms which resolves the HJ. It depends on Mg(2+) as a cofactor.

Its subcellular location is the cytoplasm. It catalyses the reaction Endonucleolytic cleavage at a junction such as a reciprocal single-stranded crossover between two homologous DNA duplexes (Holliday junction).. In terms of biological role, the RuvA-RuvB-RuvC complex processes Holliday junction (HJ) DNA during genetic recombination and DNA repair. Endonuclease that resolves HJ intermediates. Cleaves cruciform DNA by making single-stranded nicks across the HJ at symmetrical positions within the homologous arms, yielding a 5'-phosphate and a 3'-hydroxyl group; requires a central core of homology in the junction. The consensus cleavage sequence is 5'-(A/T)TT(C/G)-3'. Cleavage occurs on the 3'-side of the TT dinucleotide at the point of strand exchange. HJ branch migration catalyzed by RuvA-RuvB allows RuvC to scan DNA until it finds its consensus sequence, where it cleaves and resolves the cruciform DNA. The chain is Crossover junction endodeoxyribonuclease RuvC from Yersinia pseudotuberculosis serotype O:1b (strain IP 31758).